We begin with the raw amino-acid sequence, 658 residues long: ATP-dependent RNA helicase MRH4, mitochondrial (658 aa).

The N-terminal 32 residues, 1–32, are a transit peptide targeting the mitochondrion; sequence MLRQVTRACPFCEVRSLLGQAPRSLQPQTRLY. The span at 25-37 shows a compositional bias: polar residues; the sequence is LQPQTRLYTQVQR. Residues 25–150 are disordered; that stretch reads LQPQTRLYTQ…RNDDGKRRTR (126 aa). Basic and acidic residues predominate over residues 125 to 150; that stretch reads LERERERRESHFERPKRNDDGKRRTR. A Q motif motif is present at residues 182–214; it reads DSFDKMPLLDTVQAAIKDALPALEYRSPTPAQS. The Helicase ATP-binding domain occupies 233 to 449; it reads STKKGGPEAF…ADRFPDMNRL (217 aa). 246–253 lines the ATP pocket; sequence AETGSGKT. The interval 268-292 is disordered; the sequence is EQQEKEDAEAQAQKDADEAAAKAQD. The span at 279–292 shows a compositional bias: basic and acidic residues; sequence AQKDADEAAAKAQD. The DEAD box signature appears at 396–399; it reads DEAD. The region spanning 490–658 is the Helicase C-terminal domain; sequence RSTGEYDPAE…EAMYRGEALI (169 aa). Over residues 552-562 the composition is skewed to polar residues; it reads FTGSDTSTAIK. Residues 552 to 573 are disordered; it reads FTGSDTSTAIKSSPDAPPKPEL.

This sequence belongs to the DEAD box helicase family. MRH4 subfamily.

Its subcellular location is the mitochondrion. It catalyses the reaction ATP + H2O = ADP + phosphate + H(+). Its function is as follows. ATP-binding RNA helicase involved in mitochondrial RNA metabolism. Required for maintenance of mitochondrial DNA. The polypeptide is ATP-dependent RNA helicase MRH4, mitochondrial (MRH4) (Phaeosphaeria nodorum (strain SN15 / ATCC MYA-4574 / FGSC 10173) (Glume blotch fungus)).